A 181-amino-acid polypeptide reads, in one-letter code: MTISDQNLIWVDLEMTGLDPEIHQIIEIATIVTDAQLNILAEGPVLAIHQSEAELAKMDDWCTNTHTNSGLVERIRQSKFTEEDAIRQTIAFLEQWVPKGASPICGNSIGQDRRFLYKHMPELEQYFHYRYLDVSTIKELTRRWQPELLEGFSKKGSHLALDDIHDSIAELRYYREHIFTI.

An Exonuclease domain is found at 8-171; it reads LIWVDLEMTG…DDIHDSIAEL (164 aa). The active site involves Tyr-129.

It belongs to the oligoribonuclease family.

The protein localises to the cytoplasm. In terms of biological role, 3'-to-5' exoribonuclease specific for small oligoribonucleotides. This chain is Oligoribonuclease, found in Photobacterium profundum (strain SS9).